A 201-amino-acid chain; its full sequence is Peptidyl-tRNA hydrolase (201 aa).

TRNA is bound at residue Y14. H19 functions as the Proton acceptor in the catalytic mechanism. F64, N66, and N112 together coordinate tRNA.

Belongs to the PTH family. In terms of assembly, monomer.

The protein localises to the cytoplasm. It catalyses the reaction an N-acyl-L-alpha-aminoacyl-tRNA + H2O = an N-acyl-L-amino acid + a tRNA + H(+). Hydrolyzes ribosome-free peptidyl-tRNAs (with 1 or more amino acids incorporated), which drop off the ribosome during protein synthesis, or as a result of ribosome stalling. Its function is as follows. Catalyzes the release of premature peptidyl moieties from peptidyl-tRNA molecules trapped in stalled 50S ribosomal subunits, and thus maintains levels of free tRNAs and 50S ribosomes. In Rhodopseudomonas palustris (strain BisA53), this protein is Peptidyl-tRNA hydrolase.